Here is a 50-residue protein sequence, read N- to C-terminus: Small, acid-soluble spore protein K (50 aa).

Residues 1-50 (MVRNKAKGFPNQNNNKFEGEPRAKDDYASKRADGSINSHPQERMRASGRR) form a disordered region. Basic and acidic residues-rich tracts occupy residues 17–33 (FEGEPRAKDDYASKRAD) and 40–50 (PQERMRASGRR).

Belongs to the SspK family.

It localises to the spore core. This chain is Small, acid-soluble spore protein K, found in Bacillus velezensis (strain DSM 23117 / BGSC 10A6 / LMG 26770 / FZB42) (Bacillus amyloliquefaciens subsp. plantarum).